The chain runs to 291 residues: ATP synthase gamma chain (291 aa).

It belongs to the ATPase gamma chain family. F-type ATPases have 2 components, CF(1) - the catalytic core - and CF(0) - the membrane proton channel. CF(1) has five subunits: alpha(3), beta(3), gamma(1), delta(1), epsilon(1). CF(0) has three main subunits: a, b and c.

It localises to the cell inner membrane. Functionally, produces ATP from ADP in the presence of a proton gradient across the membrane. The gamma chain is believed to be important in regulating ATPase activity and the flow of protons through the CF(0) complex. The protein is ATP synthase gamma chain of Cupriavidus metallidurans (strain ATCC 43123 / DSM 2839 / NBRC 102507 / CH34) (Ralstonia metallidurans).